A 383-amino-acid chain; its full sequence is Dimethylsulfoniopropionate lyase 6 (383 aa).

Belongs to the aspartate/glutamate racemases family. ALMA1 subfamily. As to quaternary structure, homotetramer.

The enzyme catalyses S,S-dimethyl-beta-propiothetin = acrylate + dimethyl sulfide + H(+). Its function is as follows. Mediates cleavage of dimethylsulfoniopropionate (DMSP) into dimethyl sulfide (DMS) and acrylate. DMS is the principal form by which sulfur is transported from oceans to the atmosphere and is a key component of the ocean sulfur cycle. The chain is Dimethylsulfoniopropionate lyase 6 from Emiliania huxleyi (strain CCMP1516).